Here is a 47-residue protein sequence, read N- to C-terminus: Large ribosomal subunit protein bL34 (47 aa).

Belongs to the bacterial ribosomal protein bL34 family.

The chain is Large ribosomal subunit protein bL34 from Rhodococcus erythropolis (strain PR4 / NBRC 100887).